We begin with the raw amino-acid sequence, 1241 residues long: DNA-directed RNA polymerase subunit beta (1241 aa).

Positions 1186-1210 are disordered; that stretch reads EDEIVPTAEKRSSNQDEEALELVDN. A compositionally biased stretch (acidic residues) spans 1200–1210; that stretch reads QDEEALELVDN.

The protein belongs to the RNA polymerase beta chain family. In terms of assembly, the RNAP catalytic core consists of 2 alpha, 1 beta, 1 beta' and 1 omega subunit. When a sigma factor is associated with the core the holoenzyme is formed, which can initiate transcription.

The catalysed reaction is RNA(n) + a ribonucleoside 5'-triphosphate = RNA(n+1) + diphosphate. In terms of biological role, DNA-dependent RNA polymerase catalyzes the transcription of DNA into RNA using the four ribonucleoside triphosphates as substrates. This chain is DNA-directed RNA polymerase subunit beta, found in Clostridium novyi (strain NT).